The primary structure comprises 249 residues: Metallo-beta-lactamase type 2 (249 aa).

Residues 1-22 form the signal peptide; sequence MLKKIKISLILALGLTSLQAFG. 5 residues coordinate Zn(2+): His-98, His-100, Asp-102, His-161, and Cys-180. A substrate-binding site is contributed by Lys-183. His-222 is a Zn(2+) binding site.

Belongs to the metallo-beta-lactamase superfamily. Class-B beta-lactamase family. As to quaternary structure, monomer. Zn(2+) serves as cofactor.

The protein resides in the periplasm. The catalysed reaction is a beta-lactam + H2O = a substituted beta-amino acid. Its function is as follows. Confers resistance to the different beta-lactams antibiotics (penicillin, cephalosporin and carbapenem) via the hydrolysis of the beta-lactam ring. This is Metallo-beta-lactamase type 2 (blaB2) from Elizabethkingia meningoseptica (Chryseobacterium meningosepticum).